Reading from the N-terminus, the 357-residue chain is tRNA N6-adenosine threonylcarbamoyltransferase (357 aa).

Fe cation-binding residues include His116 and His120. Residues 139 to 143 (LVSGG), Asp172, Gly185, and Asn284 contribute to the substrate site. Fe cation is bound at residue Asp312.

This sequence belongs to the KAE1 / TsaD family. Requires Fe(2+) as cofactor.

The protein resides in the cytoplasm. It carries out the reaction L-threonylcarbamoyladenylate + adenosine(37) in tRNA = N(6)-L-threonylcarbamoyladenosine(37) in tRNA + AMP + H(+). Required for the formation of a threonylcarbamoyl group on adenosine at position 37 (t(6)A37) in tRNAs that read codons beginning with adenine. Is involved in the transfer of the threonylcarbamoyl moiety of threonylcarbamoyl-AMP (TC-AMP) to the N6 group of A37, together with TsaE and TsaB. TsaD likely plays a direct catalytic role in this reaction. The protein is tRNA N6-adenosine threonylcarbamoyltransferase of Synechococcus sp. (strain CC9605).